The chain runs to 556 residues: MDGIVPDIAVGTKRGSDELFSTCVSNGPFIMSSSASAANGNDSKKFKGDNRSTGVPSRVIHVRKLPSDVTEGEVISLGLPFGKVTNLLMLKGKNQAFIEMSTEEAANTMVNYYTSVAPVLRGQPIYIQFSNHKELKTDSSPNQARAQAALQAVNSVQSGNLALAASAAAVDAGMAMAGQSPVLRIIVENLFYPVTLDVLHQIFSKFGTVLKIITFTKNNQFQALLQYADPVSAQHAKLSLDGQNIYNACCTLRIDFSKLTSLNVKYNNDKSRDYTRPDLPSGDSQPSLDQTMAAAFGAPGIMSASPYAGAGFPPTFAIPQAAGLSVPNVHGALAPLAIPSAAAAAAAAGRIAIPGLAGAGNSVLLVSNLNPERVTPQSLFILFGVYGDVQRVKILFNKKENALVQMADGSQAQLAMSHLNGHKLHGKSVRITLSKHQSVQLPREGQEDQGLTKDYGSSPLHRFKKPGSKNFQNIFPPSATLHLSNIPPSVSEDDLKSLFSSNGGVVKGFKFFQKDRKMALIQMGSVEEAVQALIELHNHDLGENHHLRVSFSKSTI.

Position 1 is an N-acetylmethionine (Met-1). Residue Ser-16 is modified to Phosphoserine. The disordered stretch occupies residues 35–54 (ASAANGNDSKKFKGDNRSTG). RRM domains lie at 58–142 (RVIH…SSPN), 183–259 (LRII…FSKL), and 362–436 (SVLL…LSKH). Residue Lys-64 forms a Glycyl lysine isopeptide (Lys-Gly) (interchain with G-Cter in SUMO2) linkage. Tyr-126 carries the post-translational modification Phosphotyrosine. Phosphothreonine is present on Thr-137. At Ser-140 the chain carries Phosphoserine. Lys-217 is covalently cross-linked (Glycyl lysine isopeptide (Lys-Gly) (interchain with G-Cter in SUMO2)). The tract at residues 436 to 458 (HQSVQLPREGQEDQGLTKDYGSS) is disordered. Ser-458 carries the phosphoserine modification. One can recognise an RRM 4 domain in the interval 479–554 (ATLHLSNIPP…HHLRVSFSKS (76 aa)).

As to quaternary structure, monomer. Part of a ternary complex containing KHSRP, PTBP1, PTBP2 and HNRPH1. Interacts with RAVER1 and SFPQ.

The protein localises to the nucleus. In terms of biological role, plays a role in pre-mRNA splicing and in the regulation of alternative splicing events. Activates exon skipping of its own pre-mRNA during muscle cell differentiation. Binds to the polypyrimidine tract of introns. May promote RNA looping when bound to two separate polypyrimidine tracts in the same pre-mRNA. May promote the binding of U2 snRNP to pre-mRNA. Cooperates with RAVER1 to modulate switching between mutually exclusive exons during maturation of the TPM1 pre-mRNA. Represses the splicing of MAPT/Tau exon 10. Binds to polypyrimidine-rich controlling element (PCE) of CFTR and promotes exon skipping of CFTR exon 9, thereby antagonizing TIA1 and its role in exon inclusion of CFTR exon 9. Plays a role in the splicing of pyruvate kinase PKM by binding repressively to a polypyrimidine tract flanking PKM exon 9, inhibiting exon 9 inclusion and resulting in exon 10 inclusion and production of the PKM M2 isoform. This Rattus norvegicus (Rat) protein is Polypyrimidine tract-binding protein 1 (Ptbp1).